We begin with the raw amino-acid sequence, 114 residues long: Large ribosomal subunit protein uL22 (114 aa).

The protein belongs to the universal ribosomal protein uL22 family. Part of the 50S ribosomal subunit.

Functionally, this protein binds specifically to 23S rRNA; its binding is stimulated by other ribosomal proteins, e.g. L4, L17, and L20. It is important during the early stages of 50S assembly. It makes multiple contacts with different domains of the 23S rRNA in the assembled 50S subunit and ribosome. In terms of biological role, the globular domain of the protein is located near the polypeptide exit tunnel on the outside of the subunit, while an extended beta-hairpin is found that lines the wall of the exit tunnel in the center of the 70S ribosome. This chain is Large ribosomal subunit protein uL22, found in Mycoplasmopsis agalactiae (strain NCTC 10123 / CIP 59.7 / PG2) (Mycoplasma agalactiae).